Reading from the N-terminus, the 164-residue chain is HTH-type transcriptional regulator IscR (164 aa).

The 130-residue stretch at Arg2 to Asn131 folds into the HTH rrf2-type domain. The H-T-H motif DNA-binding region spans Leu28–Lys51. The [2Fe-2S] cluster site is built by Cys92, Cys98, and Cys104. The tract at residues Asn143 to Ala164 is disordered. The span at Gly152–Ala164 shows a compositional bias: polar residues.

It depends on [2Fe-2S] cluster as a cofactor.

Its function is as follows. Regulates the transcription of several operons and genes involved in the biogenesis of Fe-S clusters and Fe-S-containing proteins. This chain is HTH-type transcriptional regulator IscR, found in Yersinia pseudotuberculosis serotype O:1b (strain IP 31758).